Reading from the N-terminus, the 286-residue chain is Polyamine aminopropyltransferase (286 aa).

The PABS domain occupies 5 to 238 (TMWHETLHDQ…GIMTFAWATD (234 aa)). Glutamine 33 contacts S-methyl-5'-thioadenosine. Spermidine-binding residues include histidine 64 and aspartate 88. S-methyl-5'-thioadenosine is bound by residues glutamate 108 and 140–141 (DG). The active-site Proton acceptor is the aspartate 158. Residue 158–161 (DCTD) coordinates spermidine. Proline 165 serves as a coordination point for S-methyl-5'-thioadenosine.

Belongs to the spermidine/spermine synthase family. As to quaternary structure, homodimer or homotetramer.

The protein localises to the cytoplasm. The catalysed reaction is S-adenosyl 3-(methylsulfanyl)propylamine + putrescine = S-methyl-5'-thioadenosine + spermidine + H(+). Its pathway is amine and polyamine biosynthesis; spermidine biosynthesis; spermidine from putrescine: step 1/1. Catalyzes the irreversible transfer of a propylamine group from the amino donor S-adenosylmethioninamine (decarboxy-AdoMet) to putrescine (1,4-diaminobutane) to yield spermidine. The protein is Polyamine aminopropyltransferase of Salmonella newport (strain SL254).